The chain runs to 185 residues: Ribosome-recycling factor (185 aa).

Belongs to the RRF family.

It localises to the cytoplasm. Responsible for the release of ribosomes from messenger RNA at the termination of protein biosynthesis. May increase the efficiency of translation by recycling ribosomes from one round of translation to another. This is Ribosome-recycling factor from Buchnera aphidicola subsp. Schizaphis graminum (strain Sg).